A 256-amino-acid polypeptide reads, in one-letter code: Imidazole glycerol phosphate synthase subunit HisF (256 aa).

Residues Asp11 and Asp130 contribute to the active site.

Belongs to the HisA/HisF family. As to quaternary structure, heterodimer of HisH and HisF.

The protein localises to the cytoplasm. It carries out the reaction 5-[(5-phospho-1-deoxy-D-ribulos-1-ylimino)methylamino]-1-(5-phospho-beta-D-ribosyl)imidazole-4-carboxamide + L-glutamine = D-erythro-1-(imidazol-4-yl)glycerol 3-phosphate + 5-amino-1-(5-phospho-beta-D-ribosyl)imidazole-4-carboxamide + L-glutamate + H(+). It participates in amino-acid biosynthesis; L-histidine biosynthesis; L-histidine from 5-phospho-alpha-D-ribose 1-diphosphate: step 5/9. In terms of biological role, IGPS catalyzes the conversion of PRFAR and glutamine to IGP, AICAR and glutamate. The HisF subunit catalyzes the cyclization activity that produces IGP and AICAR from PRFAR using the ammonia provided by the HisH subunit. In Cupriavidus taiwanensis (strain DSM 17343 / BCRC 17206 / CCUG 44338 / CIP 107171 / LMG 19424 / R1) (Ralstonia taiwanensis (strain LMG 19424)), this protein is Imidazole glycerol phosphate synthase subunit HisF.